The following is a 180-amino-acid chain: ATP synthase subunit delta (180 aa).

The protein belongs to the ATPase delta chain family. In terms of assembly, F-type ATPases have 2 components, F(1) - the catalytic core - and F(0) - the membrane proton channel. F(1) has five subunits: alpha(3), beta(3), gamma(1), delta(1), epsilon(1). F(0) has three main subunits: a(1), b(2) and c(10-14). The alpha and beta chains form an alternating ring which encloses part of the gamma chain. F(1) is attached to F(0) by a central stalk formed by the gamma and epsilon chains, while a peripheral stalk is formed by the delta and b chains.

Its subcellular location is the cell inner membrane. Its function is as follows. F(1)F(0) ATP synthase produces ATP from ADP in the presence of a proton or sodium gradient. F-type ATPases consist of two structural domains, F(1) containing the extramembraneous catalytic core and F(0) containing the membrane proton channel, linked together by a central stalk and a peripheral stalk. During catalysis, ATP synthesis in the catalytic domain of F(1) is coupled via a rotary mechanism of the central stalk subunits to proton translocation. This protein is part of the stalk that links CF(0) to CF(1). It either transmits conformational changes from CF(0) to CF(1) or is implicated in proton conduction. The polypeptide is ATP synthase subunit delta (Pelobacter propionicus (strain DSM 2379 / NBRC 103807 / OttBd1)).